A 706-amino-acid polypeptide reads, in one-letter code: DNA helicase/primase complex-associated protein (706 aa).

The disordered stretch occupies residues 203-249 (CPGGDGGEEGDGAEGGDGGVGGAGDGAGAGGGSSGKPPAGKRGRPTR). Positions 217 to 236 (GGDGGVGGAGDGAGAGGGSS) are enriched in gly residues.

The protein belongs to the herpesviridae HEPA family. In terms of assembly, associates with the primase and the helicase to form the helicase-primase complex. Interacts with the origin-binding protein. Interacts with the polymerase catalytic subunit.

The protein localises to the host nucleus. Its function is as follows. Component of the helicase/primase complex. Unwinds the DNA at the replication forks and generates single-stranded DNA for both leading and lagging strand synthesis. The primase synthesizes short RNA primers on the lagging strand that the polymerase presumably elongates using dNTPs. The primase-associated factor has no known catalytic activity in the complex and may serve to facilitate the formation of the replisome by directly interacting with the origin-binding protein and the polymerase. This chain is DNA helicase/primase complex-associated protein (40), found in Equus caballus (Horse).